Consider the following 83-residue polypeptide: Small ribosomal subunit protein uS17 (83 aa).

It belongs to the universal ribosomal protein uS17 family. Part of the 30S ribosomal subunit.

Functionally, one of the primary rRNA binding proteins, it binds specifically to the 5'-end of 16S ribosomal RNA. The chain is Small ribosomal subunit protein uS17 from Ehrlichia chaffeensis (strain ATCC CRL-10679 / Arkansas).